A 468-amino-acid chain; its full sequence is Probable soluble pyridine nucleotide transhydrogenase (468 aa).

Residue 33–42 (ERGRMLGGVC) participates in FAD binding.

This sequence belongs to the class-I pyridine nucleotide-disulfide oxidoreductase family. FAD serves as cofactor.

It is found in the cytoplasm. It carries out the reaction NAD(+) + NADPH = NADH + NADP(+). In terms of biological role, conversion of NADPH, generated by peripheral catabolic pathways, to NADH, which can enter the respiratory chain for energy generation. The sequence is that of Probable soluble pyridine nucleotide transhydrogenase (sthA) from Mycobacterium bovis (strain ATCC BAA-935 / AF2122/97).